Here is a 92-residue protein sequence, read N- to C-terminus: Small ribosomal subunit protein uS19 (92 aa).

Belongs to the universal ribosomal protein uS19 family.

Its function is as follows. Protein S19 forms a complex with S13 that binds strongly to the 16S ribosomal RNA. The polypeptide is Small ribosomal subunit protein uS19 (Acidiphilium cryptum (strain JF-5)).